Consider the following 84-residue polypeptide: Cell division topological specificity factor (84 aa).

The protein belongs to the MinE family.

Its function is as follows. Prevents the cell division inhibition by proteins MinC and MinD at internal division sites while permitting inhibition at polar sites. This ensures cell division at the proper site by restricting the formation of a division septum at the midpoint of the long axis of the cell. The polypeptide is Cell division topological specificity factor (Burkholderia ambifaria (strain MC40-6)).